Reading from the N-terminus, the 286-residue chain is MSTKFALVTGCGQGGIGEALITEYARRGIHAIATVLPAEPSDHLARAGITFFPLDVTNEESVLELKARVQKLTGGRLDVLVNCAGIAYTMTAIDTDVAAVQRMFNVNVFGPMRMVHHFHDMIIKATGAIVNIGSIGGVVPYLYGSSYNATKAALQHWSNTLRVEMAPFDVRVITVISGEVATNILKNDAHRRLPEGSYYSPLAENFRQHVTRTPPRTTDRFQYAANVVAESLRSSPSAWFWYGSQSTLIRFLDMFCWRTVWDSLFWRMFDLGKLKEAHSSKAKKQV.

The NADP(+) site is built by V8, T34, D55, Y147, K151, V180, and T182. The Proton acceptor role is filled by Y147. The Lowers pKa of active site Tyr role is filled by K151.

It belongs to the short-chain dehydrogenases/reductases (SDR) family.

It participates in secondary metabolite biosynthesis. Functionally, short-chain dehydrogenase; part of the gene cluster that mediates the biosynthesis of flavoglaucin and congeners (including aspergin, dihydroauroglaucin and auroglaucin), prenylated salicylaldehyde derivatives carrying a saturated or an unsaturated C-7 side chain. The PKS fogA releases the carboxylic acid (8E,10E,12E)-3,5,7-trihydroxytetradeca-8,10,12-trienoic acid as its product, as well as derivatives with one and two double bonds. FogA is indeed able to reduce the initial triketide, thus being at least partially responsible for the differently saturated heptyl side chains of flavoglaucin congeners. The oxidoreductases fogB, fogC and fogD modify the nascent polyketide in fogA-bound form and, together, fogA, fogB, fogC and fogD are necessary for the formation of the aromatic core and the cyclized PKS products are released as salicyl alcohols. In particular, fogB is responsible for oxidation of a hydroxyl group or reduction of remaining double bond(s) at the C-7 residue whereas fogD is probably involved in the reductive release of the modified PKS products. The cytochrome P450 monooxygenase fogE is then responsible for the hydroxylation at C-3 of the benzene ring. The fogE products are substrates of the prenyltransferase fogH and the prenylated benzyl alcohols are subsequently oxidized by the fogF to produce the final aryl aldehydes flavoglaucin and congeners. The short-chain dehydrogenase fogG does not seem to be involved in the biosynthesis of the prenylated salicylaldehyde derivatives. This Aspergillus ruber (strain CBS 135680) protein is Short-chain dehydrogenase fogD.